The primary structure comprises 201 residues: MELVLKDAQSALEVSETTFGREFNEALVHQVVVAYAAGARQGTRAQKTRSDVSGGGKKPWRQKGTGRARSGTIRSPIWVGGGVTFAARPQDHSQKVNKKMYRGAVKSILSELVRQDRLIVVEKFSVEAPKTQELKAKLKELDLKDVLIITEELDENLFLAARNLYKVDVRDVQGIDPVSLIAFDKVLVTAAAVKKIEESLT.

Residues 43 to 71 (TRAQKTRSDVSGGGKKPWRQKGTGRARSG) form a disordered region.

This sequence belongs to the universal ribosomal protein uL4 family. Part of the 50S ribosomal subunit.

Its function is as follows. One of the primary rRNA binding proteins, this protein initially binds near the 5'-end of the 23S rRNA. It is important during the early stages of 50S assembly. It makes multiple contacts with different domains of the 23S rRNA in the assembled 50S subunit and ribosome. Forms part of the polypeptide exit tunnel. This is Large ribosomal subunit protein uL4 from Psychromonas ingrahamii (strain DSM 17664 / CCUG 51855 / 37).